The sequence spans 178 residues: ATP-dependent protease subunit HslV (178 aa).

Thr-7 is a catalytic residue. Na(+) contacts are provided by Gly-162, Cys-165, and Thr-168.

The protein belongs to the peptidase T1B family. HslV subfamily. As to quaternary structure, a double ring-shaped homohexamer of HslV is capped on each side by a ring-shaped HslU homohexamer. The assembly of the HslU/HslV complex is dependent on binding of ATP.

The protein resides in the cytoplasm. The enzyme catalyses ATP-dependent cleavage of peptide bonds with broad specificity.. Allosterically activated by HslU binding. In terms of biological role, protease subunit of a proteasome-like degradation complex believed to be a general protein degrading machinery. The chain is ATP-dependent protease subunit HslV from Sulfurihydrogenibium sp. (strain YO3AOP1).